The following is a 164-amino-acid chain: Pyruvoyl-dependent arginine decarboxylase (164 aa).

Ser52 carries the post-translational modification Pyruvic acid (Ser).

The protein belongs to the PdaD family. Pyruvate serves as cofactor.

The catalysed reaction is L-arginine + H(+) = agmatine + CO2. The polypeptide is Pyruvoyl-dependent arginine decarboxylase (Methanococcus maripaludis (strain C6 / ATCC BAA-1332)).